Reading from the N-terminus, the 301-residue chain is Probable alpha-L-glutamate ligase 2 (301 aa).

The 184-residue stretch at 104 to 287 (LQLLSRKGIG…VTEPIVEYIE (184 aa)) folds into the ATP-grasp domain. ATP is bound by residues K141, 178-179 (EY), D187, and 211-213 (RSN). Mg(2+)-binding residues include D248, E260, and N262. Positions 248, 260, and 262 each coordinate Mn(2+).

Belongs to the RimK family. It depends on Mg(2+) as a cofactor. Mn(2+) is required as a cofactor.

This chain is Probable alpha-L-glutamate ligase 2, found in Shewanella baltica (strain OS195).